A 122-amino-acid polypeptide reads, in one-letter code: Large ribosomal subunit protein uL14 (122 aa).

Belongs to the universal ribosomal protein uL14 family. As to quaternary structure, part of the 50S ribosomal subunit. Forms a cluster with proteins L3 and L19. In the 70S ribosome, L14 and L19 interact and together make contacts with the 16S rRNA in bridges B5 and B8.

Its function is as follows. Binds to 23S rRNA. Forms part of two intersubunit bridges in the 70S ribosome. This chain is Large ribosomal subunit protein uL14, found in Oenococcus oeni (strain ATCC BAA-331 / PSU-1).